The primary structure comprises 318 residues: Protein-methionine-sulfoxide reductase catalytic subunit MsrP (318 aa).

Residues 1 to 40 (MNRFTRYDVTPEVIFNQRRQIIKAMGLGAAALSLPNIGFA) constitute a signal peptide (tat-type signal). Mo-molybdopterin contacts are provided by residues asparagine 72, 75-76 (YE), cysteine 130, threonine 165, asparagine 217, arginine 222, and 233-235 (SIK).

This sequence belongs to the MsrP family. Heterodimer of a catalytic subunit (MsrP) and a heme-binding subunit (MsrQ). Mo-molybdopterin serves as cofactor. Post-translationally, predicted to be exported by the Tat system. The position of the signal peptide cleavage has not been experimentally proven.

The protein resides in the periplasm. The catalysed reaction is L-methionyl-[protein] + a quinone + H2O = L-methionyl-(S)-S-oxide-[protein] + a quinol. It carries out the reaction L-methionyl-[protein] + a quinone + H2O = L-methionyl-(R)-S-oxide-[protein] + a quinol. In terms of biological role, part of the MsrPQ system that repairs oxidized periplasmic proteins containing methionine sulfoxide residues (Met-O), using respiratory chain electrons. Thus protects these proteins from oxidative-stress damage caused by reactive species of oxygen and chlorine generated by the host defense mechanisms. MsrPQ is essential for the maintenance of envelope integrity under bleach stress, rescuing a wide series of structurally unrelated periplasmic proteins from methionine oxidation. The catalytic subunit MsrP is non-stereospecific, being able to reduce both (R-) and (S-) diastereoisomers of methionine sulfoxide. This chain is Protein-methionine-sulfoxide reductase catalytic subunit MsrP, found in Actinobacillus pleuropneumoniae serotype 3 (strain JL03).